Reading from the N-terminus, the 309-residue chain is Postacrosomal sheath WW domain-binding protein (309 aa).

Positions 45-87 (GRKTGTLFLTSYRVIFITSCSISDPMLSFMMPFDLMTNLTVEQ) constitute a GRAM domain. Tandem repeats lie at residues 175–181 (YGAPPAG), 182–188 (YGAPPPG), 189–195 (YGAPPAG), 217–223 (YGAPPLG), 224–230 (YGAPPAG), 231–237 (YGAPPLG), 238–244 (YGAPPLG), 245–251 (YGTPPLG), 252–258 (YGAPPLG), and 259–265 (YGAPPAG). A 10 X 7 AA tandem repeat of Y-G-X-P-P-X-G region spans residues 175-265 (YGAPPAGYGA…PLGYGAPPAG (91 aa)). The short motif at 186–189 (PPGY) is the PPxY motif element. The segment covering 251–272 (GYGAPPLGYGAPPAGNEGPPAG) has biased composition (low complexity). A disordered region spans residues 251-309 (GYGAPPLGYGAPPAGNEGPPAGYRASPAGSGARPQESTAAQAPENEASLPSASSSQVHS). Residues 298–309 (SLPSASSSQVHS) show a composition bias toward polar residues.

As to expression, expressed in testis.

In terms of biological role, may play a role in meiotic resumption and pronuclear formation, mediated by a WW domain-signaling pathway during fertilization. This chain is Postacrosomal sheath WW domain-binding protein (WBP2NL), found in Homo sapiens (Human).